A 147-amino-acid chain; its full sequence is Epididymal secretory protein E3-beta (147 aa).

The signal sequence occupies residues 1 to 25 (MASSLKIWGTLLALLCILCTLLVQS).

In terms of tissue distribution, epididymis.

The protein resides in the secreted. Functionally, possible function in sperm maturation. This Homo sapiens (Human) protein is Epididymal secretory protein E3-beta (EDDM3B).